Here is a 243-residue protein sequence, read N- to C-terminus: 7-cyano-7-deazaguanine synthase (243 aa).

9 to 19 (FSGGQDSTTCL) contacts ATP. Zn(2+) contacts are provided by C205, C220, C223, and C226.

It belongs to the QueC family. The cofactor is Zn(2+).

It catalyses the reaction 7-carboxy-7-deazaguanine + NH4(+) + ATP = 7-cyano-7-deazaguanine + ADP + phosphate + H2O + H(+). The protein operates within purine metabolism; 7-cyano-7-deazaguanine biosynthesis. In terms of biological role, catalyzes the ATP-dependent conversion of 7-carboxy-7-deazaguanine (CDG) to 7-cyano-7-deazaguanine (preQ(0)). The sequence is that of 7-cyano-7-deazaguanine synthase from Albidiferax ferrireducens (strain ATCC BAA-621 / DSM 15236 / T118) (Rhodoferax ferrireducens).